Reading from the N-terminus, the 600-residue chain is Aspartate--tRNA(Asp/Asn) ligase (600 aa).

An L-aspartate-binding site is contributed by Glu-181. The segment at 205 to 208 (QQYK) is aspartate. Arg-227 lines the L-aspartate pocket. ATP is bound by residues 227–229 (RDE) and Gln-236. His-455 provides a ligand contact to L-aspartate. Glu-490 contributes to the ATP binding site. Arg-497 is an L-aspartate binding site. 542–545 (GLDR) is a binding site for ATP.

Belongs to the class-II aminoacyl-tRNA synthetase family. Type 1 subfamily. Homodimer.

It localises to the cytoplasm. It catalyses the reaction tRNA(Asx) + L-aspartate + ATP = L-aspartyl-tRNA(Asx) + AMP + diphosphate. Aspartyl-tRNA synthetase with relaxed tRNA specificity since it is able to aspartylate not only its cognate tRNA(Asp) but also tRNA(Asn). Reaction proceeds in two steps: L-aspartate is first activated by ATP to form Asp-AMP and then transferred to the acceptor end of tRNA(Asp/Asn). The chain is Aspartate--tRNA(Asp/Asn) ligase from Methylacidiphilum infernorum (isolate V4) (Methylokorus infernorum (strain V4)).